The chain runs to 160 residues: Nucleotide-binding protein TERTU_3542 (160 aa).

Belongs to the YajQ family.

In terms of biological role, nucleotide-binding protein. The protein is Nucleotide-binding protein TERTU_3542 of Teredinibacter turnerae (strain ATCC 39867 / T7901).